Here is a 94-residue protein sequence, read N- to C-terminus: Large ribosomal subunit protein uL23 (94 aa).

It belongs to the universal ribosomal protein uL23 family. Part of the 50S ribosomal subunit. Contacts protein L29, and trigger factor when it is bound to the ribosome.

Functionally, one of the early assembly proteins it binds 23S rRNA. One of the proteins that surrounds the polypeptide exit tunnel on the outside of the ribosome. Forms the main docking site for trigger factor binding to the ribosome. The sequence is that of Large ribosomal subunit protein uL23 from Akkermansia muciniphila (strain ATCC BAA-835 / DSM 22959 / JCM 33894 / BCRC 81048 / CCUG 64013 / CIP 107961 / Muc).